Consider the following 500-residue polypeptide: MVLFHSQASCSKRVKADAIVLPFWKVKSKPKCAASIAKEYESLYRVALDSFSGERGEVEFIYNSGQGKEKRLLILGLGKNEELTSQDVLEVYAKVTRTLRKAKCTTVNVVLPTISELRIPVEDFLTNLTSGILSLNYNYPKYTKEAKKTDPLLTKVTVLGIVPKIADRIFRKEESIFEGVYLTRDLVNGNADEVTPEKLANIAKGLAKQFPSVDAKVLNKDAILKEKMGLLAAVAKGSAVDPRFIVLSYQGKPKSKDHTVLIGKGVTFDSGGLDLKPGKAMLTMKEDMAGAATVLGILSGVAALELPVNVTALIPATENAIDAASYKMGDVYVGMSGLSVEIGSTDAEGRLILADAITYALKYCKPTRIIDFATLTGAMVVSLGEDVAGFFSNNDVLAQDLFEASAETSESLWRLPLVEKYDKALHSDIADMKNIGSNRAGAITAALFLKRFLEDQPVAWAHLDIAGTAYREKDEDAYPKYASGFGVRCLIYYIEKFLSK.

Residues Lys264 and Asp269 each contribute to the Mn(2+) site. Lys276 is a catalytic residue. Residues Asp287, Asp346, and Glu348 each coordinate Mn(2+). Residue Arg350 is part of the active site.

The protein belongs to the peptidase M17 family. The cofactor is Mn(2+).

Its subcellular location is the cytoplasm. The enzyme catalyses Release of an N-terminal amino acid, Xaa-|-Yaa-, in which Xaa is preferably Leu, but may be other amino acids including Pro although not Arg or Lys, and Yaa may be Pro. Amino acid amides and methyl esters are also readily hydrolyzed, but rates on arylamides are exceedingly low.. It catalyses the reaction Release of an N-terminal amino acid, preferentially leucine, but not glutamic or aspartic acids.. In terms of biological role, presumably involved in the processing and regular turnover of intracellular proteins. Catalyzes the removal of unsubstituted N-terminal amino acids from various peptides. In Chlamydia abortus (strain DSM 27085 / S26/3) (Chlamydophila abortus), this protein is Probable cytosol aminopeptidase.